The following is a 350-amino-acid chain: S-adenosylmethionine:tRNA ribosyltransferase-isomerase (350 aa).

Belongs to the QueA family. Monomer.

It is found in the cytoplasm. The enzyme catalyses 7-aminomethyl-7-carbaguanosine(34) in tRNA + S-adenosyl-L-methionine = epoxyqueuosine(34) in tRNA + adenine + L-methionine + 2 H(+). The protein operates within tRNA modification; tRNA-queuosine biosynthesis. In terms of biological role, transfers and isomerizes the ribose moiety from AdoMet to the 7-aminomethyl group of 7-deazaguanine (preQ1-tRNA) to give epoxyqueuosine (oQ-tRNA). The polypeptide is S-adenosylmethionine:tRNA ribosyltransferase-isomerase (Bacillus cytotoxicus (strain DSM 22905 / CIP 110041 / 391-98 / NVH 391-98)).